The sequence spans 628 residues: tRNA uridine 5-carboxymethylaminomethyl modification enzyme MnmG (628 aa).

Residues 14–19 (GAGHAG), V126, and S181 each bind FAD. NAD(+) is bound at residue 273-287 (GPRYCPSIEDKVVRF). Residue Q370 coordinates FAD.

Belongs to the MnmG family. As to quaternary structure, homodimer. Heterotetramer of two MnmE and two MnmG subunits. FAD is required as a cofactor.

It localises to the cytoplasm. Its function is as follows. NAD-binding protein involved in the addition of a carboxymethylaminomethyl (cmnm) group at the wobble position (U34) of certain tRNAs, forming tRNA-cmnm(5)s(2)U34. This chain is tRNA uridine 5-carboxymethylaminomethyl modification enzyme MnmG, found in Bacillus licheniformis (strain ATCC 14580 / DSM 13 / JCM 2505 / CCUG 7422 / NBRC 12200 / NCIMB 9375 / NCTC 10341 / NRRL NRS-1264 / Gibson 46).